Reading from the N-terminus, the 253-residue chain is tRNA1(Val) (adenine(37)-N6)-methyltransferase (253 aa).

This sequence belongs to the methyltransferase superfamily. tRNA (adenine-N(6)-)-methyltransferase family.

The protein resides in the cytoplasm. The catalysed reaction is adenosine(37) in tRNA1(Val) + S-adenosyl-L-methionine = N(6)-methyladenosine(37) in tRNA1(Val) + S-adenosyl-L-homocysteine + H(+). Specifically methylates the adenine in position 37 of tRNA(1)(Val) (anticodon cmo5UAC). This is tRNA1(Val) (adenine(37)-N6)-methyltransferase from Dickeya chrysanthemi (strain Ech1591) (Dickeya zeae (strain Ech1591)).